The following is a 353-amino-acid chain: Photosystem II D2 protein (353 aa).

Threonine 2 carries the N-acetylthreonine modification. The residue at position 2 (threonine 2) is a Phosphothreonine. Residues 41 to 61 (CAYFALGGWFTGTTFVTSWYT) traverse the membrane as a helical segment. Residue histidine 118 participates in chlorophyll a binding. The helical transmembrane segment at 125-141 (GFMLRQFELARSVQLRP) threads the bilayer. Positions 130 and 143 each coordinate pheophytin a. The chain crosses the membrane as a helical span at residues 153–166 (VFVSVFLIYPLGQS). Histidine 198 serves as a coordination point for chlorophyll a. Residues 208-228 (AALLCAIHGATVENTLFEDGD) traverse the membrane as a helical segment. A plastoquinone contacts are provided by histidine 215 and phenylalanine 262. Residue histidine 215 coordinates Fe cation. Histidine 269 contacts Fe cation. A helical membrane pass occupies residues 279–295 (GLWMSALGVVGLALNLR).

The protein belongs to the reaction center PufL/M/PsbA/D family. As to quaternary structure, PSII is composed of 1 copy each of membrane proteins PsbA, PsbB, PsbC, PsbD, PsbE, PsbF, PsbH, PsbI, PsbJ, PsbK, PsbL, PsbM, PsbT, PsbX, PsbY, PsbZ, Psb30/Ycf12, at least 3 peripheral proteins of the oxygen-evolving complex and a large number of cofactors. It forms dimeric complexes. The D1/D2 heterodimer binds P680, chlorophylls that are the primary electron donor of PSII, and subsequent electron acceptors. It shares a non-heme iron and each subunit binds pheophytin, quinone, additional chlorophylls, carotenoids and lipids. There is also a Cl(-1) ion associated with D1 and D2, which is required for oxygen evolution. The PSII complex binds additional chlorophylls, carotenoids and specific lipids. serves as cofactor.

The protein localises to the plastid. It is found in the chloroplast thylakoid membrane. It catalyses the reaction 2 a plastoquinone + 4 hnu + 2 H2O = 2 a plastoquinol + O2. Its function is as follows. Photosystem II (PSII) is a light-driven water:plastoquinone oxidoreductase that uses light energy to abstract electrons from H(2)O, generating O(2) and a proton gradient subsequently used for ATP formation. It consists of a core antenna complex that captures photons, and an electron transfer chain that converts photonic excitation into a charge separation. The D1/D2 (PsbA/PsbD) reaction center heterodimer binds P680, the primary electron donor of PSII as well as several subsequent electron acceptors. D2 is needed for assembly of a stable PSII complex. This Nuphar advena (Common spatterdock) protein is Photosystem II D2 protein.